A 375-amino-acid polypeptide reads, in one-letter code: DNA replication and repair protein RecF (375 aa).

ATP is bound at residue 30–37 (GLNGQGKT).

This sequence belongs to the RecF family.

The protein localises to the cytoplasm. In terms of biological role, the RecF protein is involved in DNA metabolism; it is required for DNA replication and normal SOS inducibility. RecF binds preferentially to single-stranded, linear DNA. It also seems to bind ATP. The polypeptide is DNA replication and repair protein RecF (Halothermothrix orenii (strain H 168 / OCM 544 / DSM 9562)).